A 430-amino-acid polypeptide reads, in one-letter code: MKQMSHLDDIPSTPGKFKPYFHRTRWQSSVAKLAFWSLVFVGLIFIFFYRSPVSSNPADPSRRSLRTYSWGGPAWEKRVRSSARLRTRRGFSVLVTGAAGFVGTHVSAALKRRGDGVLGLDNFNDYYDPSLKRARQALLERSGVFVVEGDINDAALLKKLFEVVPFTHVMHLAAQAGVRYAMENPSSYVHSNIAGFVNLLEVCKSANPQPAIVWASSSSVYGLNTKVPFSEKDRTDQPASLYAATKKAGEEIAHTYNHIYGLSLTGLRFFTVYGPWGRPDMAYFFFTRDILKGKAISIFEGVNHGTVARDFTYIDDIVKGCLGALDTAEKSTGSGGKKRGAAQLRVFNLGNTSPVPVTDLVTILERLLKVKAKRNIMKLPRNGDVQFTHANISSAQRELGYKPTTDLQTGLKKFARWYLGYYNGGKKAAS.

A run of 2 helical transmembrane segments spans residues 29-49 and 90-110; these read SVAKLAFWSLVFVGLIFIFFY and GFSVLVTGAAGFVGTHVSAAL. NAD(+) is bound at residue 92 to 123; sequence SVLVTGAAGFVGTHVSAALKRRGDGVLGLDNF. The Proton acceptor role is filled by Tyr-242.

The protein belongs to the NAD(P)-dependent epimerase/dehydratase family. In terms of assembly, homodimer. As to expression, in roots, leaves, siliques, flowers, pollen and stems.

It localises to the golgi apparatus. Its subcellular location is the golgi stack membrane. The enzyme catalyses UDP-alpha-D-glucuronate = UDP-alpha-D-galacturonate. Involved in the synthesis of the negatively charged monosaccharide that forms the backbone of pectic cell wall components. This Arabidopsis thaliana (Mouse-ear cress) protein is UDP-glucuronate 4-epimerase 3 (GAE3).